A 266-amino-acid chain; its full sequence is uncharacterized protein (266 aa).

The N-terminal stretch at 1-22 is a signal peptide; the sequence is MGYFKRVVLYIIVMVVSVFIIG. A lipid anchor (N-palmitoyl cysteine) is attached at Cys23. Cys23 carries S-diacylglycerol cysteine lipidation.

Belongs to the staphylococcal tandem lipoprotein family.

The protein resides in the cell membrane. This is an uncharacterized protein from Staphylococcus aureus (strain N315).